A 256-amino-acid polypeptide reads, in one-letter code: 5-oxoprolinase subunit A (256 aa).

It belongs to the LamB/PxpA family. In terms of assembly, forms a complex composed of PxpA, PxpB and PxpC.

It carries out the reaction 5-oxo-L-proline + ATP + 2 H2O = L-glutamate + ADP + phosphate + H(+). Functionally, catalyzes the cleavage of 5-oxoproline to form L-glutamate coupled to the hydrolysis of ATP to ADP and inorganic phosphate. This Geobacillus thermodenitrificans (strain NG80-2) protein is 5-oxoprolinase subunit A.